The primary structure comprises 276 residues: L-aminoadipate-semialdehyde dehydrogenase-phosphopantetheinyl transferase (276 aa).

Belongs to the P-Pant transferase superfamily. AcpS family.

The enzyme catalyses apo-[ACP] + CoA = holo-[ACP] + adenosine 3',5'-bisphosphate + H(+). Functionally, catalyzes the transfer of a 4'-phosphopantetheine moiety from coenzyme A to a serine residue of acceptor proteins, such as alpha-aminoadipate reductase. Necessary for alpha-aminoadipate reductase activity. In Eremothecium gossypii (strain ATCC 10895 / CBS 109.51 / FGSC 9923 / NRRL Y-1056) (Yeast), this protein is L-aminoadipate-semialdehyde dehydrogenase-phosphopantetheinyl transferase (LYS5).